The sequence spans 129 residues: uncharacterized protein (129 aa).

The segment at 1-129 is disordered; that stretch reads MGRMASPLRS…PARQSARMAR (129 aa). Residues 18 to 46 are compositionally biased toward basic and acidic residues; sequence ESTRHKETSTVRVETSSHREETSSHRVET. The segment covering 47 to 59 has biased composition (low complexity); that stretch reads SSRQVRTSSRQVE. Residues 70-97 are compositionally biased toward polar residues; sequence LTPSTKRLPQFLEVSSQHVETSSQCTET.

This is an uncharacterized protein from Mus musculus (Mouse).